The primary structure comprises 267 residues: Expansin-B10 (267 aa).

The N-terminal stretch at 1-22 is a signal peptide; the sequence is MASSCLLLACVVAAAMVSAVSC. The N-linked (GlcNAc...) asparagine glycan is linked to Asn-32. The Expansin-like EG45 domain maps to 61–167; it reads GGACGYKDID…RRVRCKYPGE (107 aa). Cystine bridges form between Cys-64–Cys-92, Cys-95–Cys-162, and Cys-100–Cys-106. Residues 181 to 262 form the Expansin-like CBD domain; sequence NYFAVLVKYV…NWKANALYKS (82 aa). N-linked (GlcNAc...) asparagine glycosylation occurs at Asn-213.

This sequence belongs to the expansin family. Expansin B subfamily.

The protein localises to the secreted. The protein resides in the cell wall. It is found in the membrane. In terms of biological role, may cause loosening and extension of plant cell walls by disrupting non-covalent bonding between cellulose microfibrils and matrix glucans. No enzymatic activity has been found. May be required for rapid internodal elongation in deepwater rice during submergence. This is Expansin-B10 (EXPB10) from Oryza sativa subsp. japonica (Rice).